Reading from the N-terminus, the 98-residue chain is NADH-ubiquinone oxidoreductase chain 4L (98 aa).

3 helical membrane passes run 1-21 (MSLT…GLLM), 29-49 (SLLC…ITIL), and 61-81 (IILL…LVMV).

It belongs to the complex I subunit 4L family. As to quaternary structure, core subunit of respiratory chain NADH dehydrogenase (Complex I) which is composed of 45 different subunits.

It is found in the mitochondrion inner membrane. It catalyses the reaction a ubiquinone + NADH + 5 H(+)(in) = a ubiquinol + NAD(+) + 4 H(+)(out). Its function is as follows. Core subunit of the mitochondrial membrane respiratory chain NADH dehydrogenase (Complex I) which catalyzes electron transfer from NADH through the respiratory chain, using ubiquinone as an electron acceptor. Part of the enzyme membrane arm which is embedded in the lipid bilayer and involved in proton translocation. This is NADH-ubiquinone oxidoreductase chain 4L (MT-ND4L) from Ectophylla alba (White bat).